The primary structure comprises 340 residues: MGGGVSVELPKRDPPPGVPTDEMLLNVDKMHDVIAPAKLLEYVHIGPLAKDKEDKVKKRYPEFRLVNTGPGGLSALLRQSYNGTAPNCCRTFNRTHYWKKDGKISDKYEEGAVLESCWPDVHDTGKCDVDLFDWCQGDTFDRNICHQWIGSAFNRSNRTVEGQQSLINLYNKMQTLCSKDASVPICESFLHHLRAHNTEDSKEMIDYILRQQSADFKQKYMRCSYPTRDKLEESLKYAEPRECWDPECSNANVNFLLTRNYNNLGLCNIVRCNTSVNNLQMDKTSSLRLSCGLSNSDRFSTVPVNRAKVVQHNIKHSFDLKLHLISLLSLLVIWILIVAI.

Residues 1-20 (MGGGVSVELPKRDPPPGVPT) form a disordered region. Gly-2 is lipidated: N-myristoyl glycine; by host. Residues 2–319 (GGGVSVELPK…VQHNIKHSFD (318 aa)) lie on the Virion surface side of the membrane. Residues 320–340 (LKLHLISLLSLLVIWILIVAI) traverse the membrane as a helical; Signal-anchor for type II membrane protein segment.

The protein belongs to the orthopoxvirus OPG086 family. As to quaternary structure, interacts with OPG143. Component of the entry fusion complex (EFC) composed of OPG053, OPG076, OPG086, OPG094, OPG095, OPG099, OPG107, OPG143, OPG104, OPG147 and OPG155. Except for OPG095 and OPG053, each of the EFC proteins is required for assembly or stability of the complex. In terms of processing, unglycosylated because produced in viral factories instead of the classic ER -Golgi route.

The protein localises to the virion membrane. In terms of biological role, component of the entry fusion complex (EFC), which consists of 11 proteins. During cell infection, this complex mediates entry of the virion core into the host cytoplasm by a two-step mechanism consisting of lipid mixing of the viral and cellular membranes and subsequent pore formation. In Vaccinia virus (strain Copenhagen) (VACV), this protein is Entry-fusion complex protein OPG094 (OPG094).